The following is a 93-amino-acid chain: MPAACRCLFLLLLSACVALLLQPPLGTRGAPLEPVYPGDDATPEQMAQYAAELRRYINMLTRPRYGKRDRGEMRDILEWGSPHAAAPRELMDE.

The N-terminal stretch at 1–29 (MPAACRCLFLLLLSACVALLLQPPLGTRG) is a signal peptide. Tyr-65 carries the post-translational modification Tyrosine amide. A propeptide spanning residues 89–93 (ELMDE) is cleaved from the precursor.

It belongs to the NPY family.

The protein resides in the secreted. Its function is as follows. Hormone secreted by pancreatic cells that acts as a regulator of pancreatic and gastrointestinal functions probably by signaling through the G protein-coupled receptor NPY4R2. In Canis lupus familiaris (Dog), this protein is Pancreatic polypeptide prohormone (PPY).